Here is a 297-residue protein sequence, read N- to C-terminus: Acetylglutamate kinase (297 aa).

Residues 68-69 (GG), arginine 90, and asparagine 195 each bind substrate.

Belongs to the acetylglutamate kinase family. ArgB subfamily.

It is found in the cytoplasm. It catalyses the reaction N-acetyl-L-glutamate + ATP = N-acetyl-L-glutamyl 5-phosphate + ADP. It participates in amino-acid biosynthesis; L-arginine biosynthesis; N(2)-acetyl-L-ornithine from L-glutamate: step 2/4. In terms of biological role, catalyzes the ATP-dependent phosphorylation of N-acetyl-L-glutamate. The chain is Acetylglutamate kinase from Mesorhizobium japonicum (strain LMG 29417 / CECT 9101 / MAFF 303099) (Mesorhizobium loti (strain MAFF 303099)).